The primary structure comprises 155 residues: E3 ubiquitin-protein ligase RHA2A (155 aa).

An RING-type; atypical zinc finger spans residues 86 to 128 (CVVCLSKLKEGEEVRKLECRHVFHKKCLEGWLHQFNFTCPLCR).

Interacts with NAC019 and NAC055. Expressed in stems, flowers, cauline leaves, rosettes, siliques, seeds and roots.

It is found in the cytoplasm. The protein localises to the nucleus. It catalyses the reaction S-ubiquitinyl-[E2 ubiquitin-conjugating enzyme]-L-cysteine + [acceptor protein]-L-lysine = [E2 ubiquitin-conjugating enzyme]-L-cysteine + N(6)-ubiquitinyl-[acceptor protein]-L-lysine.. It functions in the pathway protein modification; protein ubiquitination. Functionally, E3 ubiquitin-protein ligase involved in the positive regulation of abscisic acid (ABA) signaling and responses to salt and osmotic stresses during seed germination and early seedling development. Acts additively with RHA2B in regulating ABA signaling and drought response. Possesses E3 ubiquitin ligase activity in vitro. This Arabidopsis thaliana (Mouse-ear cress) protein is E3 ubiquitin-protein ligase RHA2A.